The sequence spans 318 residues: tRNA-modifying protein YgfZ (318 aa).

Residues Trp28 and Trp182 each coordinate folate.

It belongs to the tRNA-modifying YgfZ family.

The protein localises to the cytoplasm. Its function is as follows. Folate-binding protein involved in regulating the level of ATP-DnaA and in the modification of some tRNAs. It is probably a key factor in regulatory networks that act via tRNA modification, such as initiation of chromosomal replication. The polypeptide is tRNA-modifying protein YgfZ (Aliivibrio fischeri (strain ATCC 700601 / ES114) (Vibrio fischeri)).